Reading from the N-terminus, the 488-residue chain is Ammonium transporter 1 member 1 (488 aa).

A run of 11 helical transmembrane segments spans residues 47–69 (TYLL…LLAG), 90–109 (LFYY…NGFI), 129–148 (FLYQ…GSIA), 153–175 (FVAY…SHWF), 195–217 (VIDF…YGAL), 238–257 (HSAS…WYGF), 281–303 (AVGR…TLFG), 316–333 (VCNG…GCSV), 337–356 (WAAI…FNML), 368–387 (AAQL…GLFA), and 418–440 (HIIQ…FYIL).

It belongs to the ammonia transporter channel (TC 1.A.11.2) family. Root hairs and leaves.

Its subcellular location is the membrane. Functionally, ammonium transporter that may be involved in ammonium uptake from the soil. This Solanum lycopersicum (Tomato) protein is Ammonium transporter 1 member 1 (AMT1-1).